A 343-amino-acid polypeptide reads, in one-letter code: Probable beta-1,3-galactosyltransferase 13 (343 aa).

Residues 22–42 (LIVFTSLAIGLTGFLFGLSTI) traverse the membrane as a helical; Signal-anchor for type II membrane protein segment. Asn-265 carries N-linked (GlcNAc...) asparagine glycosylation.

Belongs to the glycosyltransferase 31 family. Mn(2+) is required as a cofactor.

The protein resides in the golgi apparatus membrane. Its pathway is protein modification; protein glycosylation. Its function is as follows. Beta-1,3-galactosyltransferase that transfers galactose from UDP-galactose to substrates with a terminal glycosyl residue. The protein is Probable beta-1,3-galactosyltransferase 13 (B3GALT13) of Arabidopsis thaliana (Mouse-ear cress).